Reading from the N-terminus, the 218-residue chain is UPF0502 protein CJA_1529 (218 aa).

This sequence belongs to the UPF0502 family.

This Cellvibrio japonicus (strain Ueda107) (Pseudomonas fluorescens subsp. cellulosa) protein is UPF0502 protein CJA_1529.